The sequence spans 416 residues: GTPase Obg (416 aa).

The 157-residue stretch at 1–157 folds into the Obg domain; it reads MFQDVLVITV…RRLRLELMLI (157 aa). Disordered regions lie at residues 25 to 44 and 62 to 82; these read EKFV…GGSV and TYKA…RGGE. The segment covering 32–42 has biased composition (gly residues); that stretch reads GPDGGDGGRGG. The segment covering 63-72 has biased composition (basic and acidic residues); the sequence is YKAEDGEHGR. In terms of domain architecture, OBG-type G spans 158 to 324; the sequence is ADVGLVGYPN…LKEALHALVR (167 aa). GTP-binding positions include 164-171, 189-193, 211-214, 277-280, and 305-307; these read GYPNAGKS, FTTLS, DIPG, NKVD, and SAL. Mg(2+) is bound by residues Ser171 and Thr191. One can recognise an OCT domain in the interval 336-414; it reads PRKEVQAGVE…IGGLEFEYIP (79 aa).

Belongs to the TRAFAC class OBG-HflX-like GTPase superfamily. OBG GTPase family. As to quaternary structure, monomer. It depends on Mg(2+) as a cofactor.

It localises to the cytoplasm. An essential GTPase which binds GTP, GDP and possibly (p)ppGpp with moderate affinity, with high nucleotide exchange rates and a fairly low GTP hydrolysis rate. Plays a role in control of the cell cycle, stress response, ribosome biogenesis and in those bacteria that undergo differentiation, in morphogenesis control. This chain is GTPase Obg, found in Thermus thermophilus (strain ATCC BAA-163 / DSM 7039 / HB27).